A 388-amino-acid polypeptide reads, in one-letter code: GTPase Obg (388 aa).

The Obg domain maps to 4-162 (SNFVDYVKIY…MTVILELKLL (159 aa)). Residues 18–45 (KGGRGSTHMRREKYTPNGGPDGGDGGRG) are disordered. Positions 36 to 45 (GPDGGDGGRG) are enriched in gly residues. Residues 163–329 (ADVGLVGFPN…LKDILWTELN (167 aa)) enclose the OBG-type G domain. GTP is bound by residues 169–176 (GFPNAGKS), 194–198 (FTTLE), 216–219 (DIPG), 283–286 (TKSD), and 310–312 (SSV). Residues serine 176 and threonine 196 each contribute to the Mg(2+) site. A disordered region spans residues 352 to 388 (LKDMGEDEELDYEYEDDGDGDEDDLDYEYEEEDWEDK). A compositionally biased stretch (acidic residues) spans 356–388 (GEDEELDYEYEDDGDGDEDDLDYEYEEEDWEDK).

It belongs to the TRAFAC class OBG-HflX-like GTPase superfamily. OBG GTPase family. In terms of assembly, monomer. The cofactor is Mg(2+).

The protein localises to the cytoplasm. Functionally, an essential GTPase which binds GTP, GDP and possibly (p)ppGpp with moderate affinity, with high nucleotide exchange rates and a fairly low GTP hydrolysis rate. Plays a role in control of the cell cycle, stress response, ribosome biogenesis and in those bacteria that undergo differentiation, in morphogenesis control. The protein is GTPase Obg of Bacteroides fragilis (strain ATCC 25285 / DSM 2151 / CCUG 4856 / JCM 11019 / LMG 10263 / NCTC 9343 / Onslow / VPI 2553 / EN-2).